Here is a 303-residue protein sequence, read N- to C-terminus: UDP-3-O-acyl-N-acetylglucosamine deacetylase (303 aa).

Zn(2+)-binding residues include His78, His237, and Asp241. The Proton donor role is filled by His264.

This sequence belongs to the LpxC family. Zn(2+) serves as cofactor.

It catalyses the reaction a UDP-3-O-[(3R)-3-hydroxyacyl]-N-acetyl-alpha-D-glucosamine + H2O = a UDP-3-O-[(3R)-3-hydroxyacyl]-alpha-D-glucosamine + acetate. The protein operates within glycolipid biosynthesis; lipid IV(A) biosynthesis; lipid IV(A) from (3R)-3-hydroxytetradecanoyl-[acyl-carrier-protein] and UDP-N-acetyl-alpha-D-glucosamine: step 2/6. Its function is as follows. Catalyzes the hydrolysis of UDP-3-O-myristoyl-N-acetylglucosamine to form UDP-3-O-myristoylglucosamine and acetate, the committed step in lipid A biosynthesis. This Pseudomonas aeruginosa (strain LESB58) protein is UDP-3-O-acyl-N-acetylglucosamine deacetylase.